Consider the following 233-residue polypeptide: Pilin-like protein PilA3 (233 aa).

Positions 1–4 are cleaved as a propeptide — leader sequence; it reads MKRG. An N-methylphenylalanine modification is found at phenylalanine 5. A helical transmembrane segment spans residues 5 to 25; it reads FTLVEVLVAMAILVVVLAVGV. The tract at residues 121 to 143 is disordered; that stretch reads LRRSDVNATPSSGSDCTTPPPNS. Positions 126–137 are enriched in polar residues; the sequence is VNATPSSGSDCT.

The protein resides in the cell inner membrane. It is found in the cell outer membrane. Its subcellular location is the periplasm. Plays an essential role in natural DNA transformation but is not required for pilus biogenesis. The protein is Pilin-like protein PilA3 (pilA3) of Thermus thermophilus (strain ATCC BAA-163 / DSM 7039 / HB27).